The primary structure comprises 378 residues: Ribosomal RNA large subunit methyltransferase G (378 aa).

The protein belongs to the methyltransferase superfamily. RlmG family.

It localises to the cytoplasm. It catalyses the reaction guanosine(1835) in 23S rRNA + S-adenosyl-L-methionine = N(2)-methylguanosine(1835) in 23S rRNA + S-adenosyl-L-homocysteine + H(+). Functionally, specifically methylates the guanine in position 1835 (m2G1835) of 23S rRNA. The polypeptide is Ribosomal RNA large subunit methyltransferase G (Escherichia coli O6:K15:H31 (strain 536 / UPEC)).